The sequence spans 255 residues: Geranylgeranylglyceryl phosphate synthase (255 aa).

Mg(2+)-binding residues include Asp-31 and Ser-60. Residues 179–185, 211–212, and 233–234 each bind sn-glycerol 1-phosphate; these read YLEAGSG, GG, and GT.

The protein belongs to the GGGP/HepGP synthase family. Group II subfamily. Mg(2+) serves as cofactor.

It is found in the cytoplasm. It catalyses the reaction sn-glycerol 1-phosphate + (2E,6E,10E)-geranylgeranyl diphosphate = sn-3-O-(geranylgeranyl)glycerol 1-phosphate + diphosphate. Its pathway is membrane lipid metabolism; glycerophospholipid metabolism. In terms of biological role, prenyltransferase that catalyzes the transfer of the geranylgeranyl moiety of geranylgeranyl diphosphate (GGPP) to the C3 hydroxyl of sn-glycerol-1-phosphate (G1P). This reaction is the first ether-bond-formation step in the biosynthesis of archaeal membrane lipids. In Methanothrix thermoacetophila (strain DSM 6194 / JCM 14653 / NBRC 101360 / PT) (Methanosaeta thermophila), this protein is Geranylgeranylglyceryl phosphate synthase.